The following is a 119-amino-acid chain: Large ribosomal subunit protein bL19 (119 aa).

Belongs to the bacterial ribosomal protein bL19 family.

Its function is as follows. This protein is located at the 30S-50S ribosomal subunit interface and may play a role in the structure and function of the aminoacyl-tRNA binding site. The protein is Large ribosomal subunit protein bL19 of Photobacterium profundum (strain SS9).